Consider the following 503-residue polypeptide: Cytochrome P450 11B1, mitochondrial (503 aa).

A mitochondrion-targeting transit peptide spans 1–24 (MALWAKARVWMAGPWLSLHRARPL). Position 450 (Cys450) interacts with heme.

The protein belongs to the cytochrome P450 family. Heme is required as a cofactor.

The protein localises to the mitochondrion inner membrane. It catalyses the reaction a steroid + 2 reduced [adrenodoxin] + O2 + 2 H(+) = an 11beta-hydroxysteroid + 2 oxidized [adrenodoxin] + H2O. The enzyme catalyses 11-deoxycortisol + 2 reduced [adrenodoxin] + O2 + 2 H(+) = cortisol + 2 oxidized [adrenodoxin] + H2O. The catalysed reaction is 21-hydroxyprogesterone + 2 reduced [adrenodoxin] + O2 + 2 H(+) = corticosterone + 2 oxidized [adrenodoxin] + H2O. It carries out the reaction corticosterone + 2 reduced [adrenodoxin] + O2 + 2 H(+) = 18-hydroxycorticosterone + 2 oxidized [adrenodoxin] + H2O. It catalyses the reaction 18-hydroxycorticosterone + 2 reduced [adrenodoxin] + O2 + 2 H(+) = aldosterone + 2 oxidized [adrenodoxin] + 2 H2O. The enzyme catalyses 21-hydroxyprogesterone + 2 reduced [adrenodoxin] + O2 + 2 H(+) = 19-hydroxy-11-deoxycorticosterone + 2 oxidized [adrenodoxin] + H2O. The catalysed reaction is 19-hydroxy-11-deoxycorticosterone + 2 reduced [adrenodoxin] + O2 + 2 H(+) = 19-oxo-11-deoxycorticosterone + 2 oxidized [adrenodoxin] + 2 H2O. It participates in steroid biosynthesis; glucocorticoid biosynthesis. The protein operates within steroid hormone biosynthesis. A cytochrome P450 monooxygenase that catalyzes the biosynthesis of aldosterone and other adrenal corticoids. Differing from other species (such as human, rat and mice), it is able to catalyze three sequential oxidative reactions of 11-deoxycorticosterone (21-hydroxyprogesterone), namely 11-beta hydroxylation, followed by two successive oxidations at C18 yielding 18-hydroxy and then 18-oxo intermediates, and ending with the formation of aldosterone. Steroid 11beta, 18- and 19-hydroxylase. Mechanistically, uses molecular oxygen inserting one oxygen atom into a substrate and reducing the second into a water molecule. Two electrons are provided by NADPH via a two-protein mitochondrial transfer system comprising flavoprotein FDXR (adrenodoxin/ferredoxin reductase) and nonheme iron-sulfur protein FDX1 or FDX2 (adrenodoxin/ferredoxin). The polypeptide is Cytochrome P450 11B1, mitochondrial (CYP11B1) (Ovis aries (Sheep)).